A 205-amino-acid chain; its full sequence is Urease accessory protein UreG (205 aa).

Position 12 to 19 (12 to 19 (GPVGSGKT)) interacts with GTP.

The protein belongs to the SIMIBI class G3E GTPase family. UreG subfamily. As to quaternary structure, homodimer. UreD, UreF and UreG form a complex that acts as a GTP-hydrolysis-dependent molecular chaperone, activating the urease apoprotein by helping to assemble the nickel containing metallocenter of UreC. The UreE protein probably delivers the nickel.

Its subcellular location is the cytoplasm. Its function is as follows. Facilitates the functional incorporation of the urease nickel metallocenter. This process requires GTP hydrolysis, probably effectuated by UreG. This chain is Urease accessory protein UreG, found in Pseudomonas savastanoi pv. phaseolicola (strain 1448A / Race 6) (Pseudomonas syringae pv. phaseolicola (strain 1448A / Race 6)).